A 493-amino-acid polypeptide reads, in one-letter code: Cytochrome P450 710A3 (493 aa).

The helical transmembrane segment at 5-25 threads the bilayer; it reads VSLFASLTPYLVSALLLFLLL. C435 contributes to the heme binding site.

This sequence belongs to the cytochrome P450 family. Requires heme as cofactor. As to expression, expressed in stems. Detected in primary root caps and immature petals.

The protein localises to the membrane. It carries out the reaction 5-dehydroepisterol + NADPH + O2 + H(+) = ergosta-5,7,22,24(28)-tetraen-3beta-ol + NADP(+) + 2 H2O. Its function is as follows. Required to form the C-22 double bond in the sterol side chain. Possesses in vitro C-22 desaturase activity toward beta-sitosterol and produces stigmasterol. This is Cytochrome P450 710A3 from Arabidopsis thaliana (Mouse-ear cress).